The primary structure comprises 484 residues: E-selectin (484 aa).

Residues 1–22 (MIASQFLSALPLVLLLLRESGA) form the signal peptide. The C-type lectin domain occupies 23-140 (WSYSASTETM…CSKKKLALCY (118 aa)). Over 23–429 (WSYSASTETM…CEAPAESKIP (407 aa)) the chain is Extracellular. 14 disulfides stabilise this stretch: Cys41–Cys139, Cys112–Cys131, Cys144–Cys155, Cys149–Cys164, Cys166–Cys175, Cys181–Cys222, Cys194–Cys204, Cys208–Cys235, Cys240–Cys285, Cys271–Cys298, Cys303–Cys348, Cys334–Cys361, Cys366–Cys407, and Cys393–Cys420. Asn61, Asn65, and Asn79 each carry an N-linked (GlcNAc...) asparagine glycan. Ca(2+)-binding residues include Glu102, Asn104, and Glu110. A carbohydrate contacts are provided by residues 102 to 110 (EPNNKQSNE), 114 to 119 (EIYIKR), and 127 to 129 (NDE). The Ca(2+) site is built by Asn127 and Asp128. In terms of domain architecture, EGF-like spans 141–176 (TAACTPTSCSGHGECIETINSSTCQCYPGFRGLQCE). The N-linked (GlcNAc...) asparagine glycan is linked to Asn160. Sushi domains lie at 179 to 237 (VECD…TCKA), 251 to 300 (VSCN…VCKA), 301 to 363 (VKCP…SCQV), and 364 to 422 (VQCS…TCEA). An N-linked (GlcNAc...) asparagine glycan is attached at Asn201. Asn254 is a glycosylation site (N-linked (GlcNAc...) asparagine). Asn376 and Asn400 each carry an N-linked (GlcNAc...) asparagine glycan. A helical transmembrane segment spans residues 430 to 451 (LAMGLAAGGVSFMTSASFLLWL). Residues 452–484 (LKRLRKRAKKFVPSSSSECLQPNGSYQMPSDLI) are Cytoplasmic-facing.

It belongs to the selectin/LECAM family. As to quaternary structure, interacts with SELPLG/PSGL1 and PODXL2 through the sialyl Lewis X epitope. SELPLG sulfation appears not to be required for this interaction.

It localises to the cell membrane. Its function is as follows. Cell-surface glycoprotein having a role in immunoadhesion. Mediates in the adhesion of blood neutrophils in cytokine-activated endothelium through interaction with SELPLG/PSGL1. May have a role in capillary morphogenesis. In Sus scrofa (Pig), this protein is E-selectin (SELE).